A 254-amino-acid chain; its full sequence is 5-oxoprolinase subunit A (254 aa).

This sequence belongs to the LamB/PxpA family. Forms a complex composed of PxpA, PxpB and PxpC.

It catalyses the reaction 5-oxo-L-proline + ATP + 2 H2O = L-glutamate + ADP + phosphate + H(+). Functionally, catalyzes the cleavage of 5-oxoproline to form L-glutamate coupled to the hydrolysis of ATP to ADP and inorganic phosphate. The chain is 5-oxoprolinase subunit A from Burkholderia mallei (strain NCTC 10247).